The chain runs to 338 residues: Ketol-acid reductoisomerase (NADP(+)) (338 aa).

The KARI N-terminal Rossmann domain occupies M1–T181. NADP(+)-binding positions include Y24–Q27, R47, S50, S52, and D82–Q85. Residue H107 is part of the active site. G133 lines the NADP(+) pocket. The KARI C-terminal knotted domain maps to S182–I327. Positions 190, 194, 226, and 230 each coordinate Mg(2+). S251 serves as a coordination point for substrate.

The protein belongs to the ketol-acid reductoisomerase family. It depends on Mg(2+) as a cofactor.

The catalysed reaction is (2R)-2,3-dihydroxy-3-methylbutanoate + NADP(+) = (2S)-2-acetolactate + NADPH + H(+). It carries out the reaction (2R,3R)-2,3-dihydroxy-3-methylpentanoate + NADP(+) = (S)-2-ethyl-2-hydroxy-3-oxobutanoate + NADPH + H(+). The protein operates within amino-acid biosynthesis; L-isoleucine biosynthesis; L-isoleucine from 2-oxobutanoate: step 2/4. It functions in the pathway amino-acid biosynthesis; L-valine biosynthesis; L-valine from pyruvate: step 2/4. Involved in the biosynthesis of branched-chain amino acids (BCAA). Catalyzes an alkyl-migration followed by a ketol-acid reduction of (S)-2-acetolactate (S2AL) to yield (R)-2,3-dihydroxy-isovalerate. In the isomerase reaction, S2AL is rearranged via a Mg-dependent methyl migration to produce 3-hydroxy-3-methyl-2-ketobutyrate (HMKB). In the reductase reaction, this 2-ketoacid undergoes a metal-dependent reduction by NADPH to yield (R)-2,3-dihydroxy-isovalerate. The sequence is that of Ketol-acid reductoisomerase (NADP(+)) from Alkalilimnicola ehrlichii (strain ATCC BAA-1101 / DSM 17681 / MLHE-1).